Here is a 670-residue protein sequence, read N- to C-terminus: DNA ligase (670 aa).

NAD(+)-binding positions include 32-36 (DSEYD), 81-82 (SL), and Glu-114. Lys-116 functions as the N6-AMP-lysine intermediate in the catalytic mechanism. Arg-137, Glu-174, Lys-291, and Lys-315 together coordinate NAD(+). The Zn(2+) site is built by Cys-409, Cys-412, Cys-427, and Cys-433. The region spanning 592–670 (ASENLFKDKT…EEEFLAQITR (79 aa)) is the BRCT domain.

This sequence belongs to the NAD-dependent DNA ligase family. LigA subfamily. Requires Mg(2+) as cofactor. Mn(2+) is required as a cofactor.

It catalyses the reaction NAD(+) + (deoxyribonucleotide)n-3'-hydroxyl + 5'-phospho-(deoxyribonucleotide)m = (deoxyribonucleotide)n+m + AMP + beta-nicotinamide D-nucleotide.. Its function is as follows. DNA ligase that catalyzes the formation of phosphodiester linkages between 5'-phosphoryl and 3'-hydroxyl groups in double-stranded DNA using NAD as a coenzyme and as the energy source for the reaction. It is essential for DNA replication and repair of damaged DNA. This is DNA ligase from Haemophilus influenzae (strain PittEE).